Consider the following 372-residue polypeptide: Cuticle collagen dpy-10 (372 aa).

The signal sequence occupies residues 1–45; it reads MKNNAKEDYRTFSLTTNYSRQMIYRCVTGLQIGFSLFSFIIVCVA. Triple-helical region regions lie at residues 144–173, 195–251, and 259–324; these read GPPG…PGTT, GPPG…KGPT, and GPPG…PGVC. The tract at residues 144-372 is disordered; sequence GPPGPRGSSG…RAGYQGYGRK (229 aa). A compositionally biased stretch (pro residues) spans 185–196; sequence EPPPCRPCPKGP. Positions 197 to 208 are enriched in low complexity; sequence PGIKGWPGFPGD. Composition is skewed to gly residues over residues 237 to 246 and 283 to 292; these read GYRGGPGAPG and GLTGGQGERG. Residues 293 to 303 show a composition bias toward low complexity; the sequence is WPGVSGESGEP. Positions 353-363 are enriched in gly residues; it reads GYGGSRGGGDR.

It belongs to the cuticular collagen family. Collagen polypeptide chains are complexed within the cuticle by disulfide bonds and other types of covalent cross-links.

Nematode cuticles are composed largely of collagen-like proteins. The cuticle functions both as an exoskeleton and as a barrier to protect the worm from its environment. This chain is Cuticle collagen dpy-10 (dpy-10), found in Caenorhabditis elegans.